Reading from the N-terminus, the 287-residue chain is Pyridoxal kinase PdxY (287 aa).

Residues serine 9 and 44 to 45 contribute to the substrate site; that span reads MQ. Residues aspartate 111, alanine 142, glutamate 147, and lysine 180 each coordinate ATP. Aspartate 221 provides a ligand contact to substrate.

The protein belongs to the pyridoxine kinase family. PdxY subfamily. As to quaternary structure, homodimer. The cofactor is Mg(2+).

It carries out the reaction pyridoxal + ATP = pyridoxal 5'-phosphate + ADP + H(+). The protein operates within cofactor metabolism; pyridoxal 5'-phosphate salvage; pyridoxal 5'-phosphate from pyridoxal: step 1/1. Functionally, pyridoxal kinase involved in the salvage pathway of pyridoxal 5'-phosphate (PLP). Catalyzes the phosphorylation of pyridoxal to PLP. The protein is Pyridoxal kinase PdxY of Burkholderia mallei (strain ATCC 23344).